The following is a 219-amino-acid chain: MDTWHDALGGEKQQPYFQEILNAVRQERLSGQIIYPPAADVFNAFRLTAFDRVKAVILGQDPYHGAGQAHGLAFSVRQGIRIPPSLLNIYKELETDIEGFSIPAHGCLTAWAEQGVLLLNTVLTVRAGQAHSHALLGWERFTDTVIRQLATHRKHLVFMLWGGYAQQKRKLIDSQNYLILTAPHPSPLSAYRGFFGCRHFSQANSYLSRHGIDPINWKL.

Aspartate 61 serves as the catalytic Proton acceptor.

The protein belongs to the uracil-DNA glycosylase (UDG) superfamily. UNG family.

Its subcellular location is the cytoplasm. The enzyme catalyses Hydrolyzes single-stranded DNA or mismatched double-stranded DNA and polynucleotides, releasing free uracil.. In terms of biological role, excises uracil residues from the DNA which can arise as a result of misincorporation of dUMP residues by DNA polymerase or due to deamination of cytosine. The sequence is that of Uracil-DNA glycosylase from Neisseria meningitidis serogroup A / serotype 4A (strain DSM 15465 / Z2491).